The primary structure comprises 72 residues: Metallothionein-like protein 1 (72 aa).

It belongs to the metallothionein superfamily. Type 15 family.

Its function is as follows. Metallothioneins have a high content of cysteine residues that bind various heavy metals. This chain is Metallothionein-like protein 1, found in Erythranthe guttata (Yellow monkey flower).